A 390-amino-acid chain; its full sequence is Nuclear receptor subfamily 2 group F member 6 (390 aa).

Over residues Met1 to Thr15 the composition is skewed to gly residues. Residues Met1 to Arg50 are disordered. Ser35 and Ser41 each carry phosphoserine. The segment at residues Gln54 to Pro129 is a DNA-binding region (nuclear receptor). NR C4-type zinc fingers lie at residues Cys57–Cys77 and Cys93–Cys117. Positions Pro157–Gly380 constitute an NR LBD domain. The important for dimerization stretch occupies residues Leu314–Gly390.

This sequence belongs to the nuclear hormone receptor family. NR2 subfamily. As to quaternary structure, binds DNA as dimer; homodimer and heterodimer with NR2F2 and probably NR2F1. Interacts with THRB.

The protein resides in the nucleus. In terms of biological role, transcription factor predominantly involved in transcriptional repression. Binds to promoter/enhancer response elements that contain the imperfect 5'-AGGTCA-3' direct or inverted repeats with various spacings which are also recognized by other nuclear hormone receptors. Involved in modulation of hormonal responses. Represses transcriptional activity of the lutropin-choriogonadotropic hormone receptor/LHCGR gene, the renin/REN gene and the oxytocin-neurophysin/OXT gene. Represses the triiodothyronine-dependent and -independent transcriptional activity of the thyroid hormone receptor gene in a cell type-specific manner. The corepressing function towards thyroid hormone receptor beta/THRB involves at least in part the inhibition of THRB binding to triiodothyronine response elements (TREs) by NR2F6. Inhibits NFATC transcription factor DNA binding and subsequently its transcriptional activity. Acts as transcriptional repressor of IL-17 expression in Th-17 differentiated CD4(+) T cells and may be involved in induction and/or maintenance of peripheral immunological tolerance and autoimmunity. Involved in development of forebrain circadian clock; is required early in the development of the locus coeruleus (LC). The polypeptide is Nuclear receptor subfamily 2 group F member 6 (Nr2f6) (Rattus norvegicus (Rat)).